A 97-amino-acid polypeptide reads, in one-letter code: Co-chaperonin GroES (97 aa).

It belongs to the GroES chaperonin family. In terms of assembly, heptamer of 7 subunits arranged in a ring. Interacts with the chaperonin GroEL.

Its subcellular location is the cytoplasm. In terms of biological role, together with the chaperonin GroEL, plays an essential role in assisting protein folding. The GroEL-GroES system forms a nano-cage that allows encapsulation of the non-native substrate proteins and provides a physical environment optimized to promote and accelerate protein folding. GroES binds to the apical surface of the GroEL ring, thereby capping the opening of the GroEL channel. The protein is Co-chaperonin GroES of Yersinia enterocolitica.